The following is a 594-amino-acid chain: Aspartate--tRNA(Asp/Asn) ligase (594 aa).

Glutamate 175 is an L-aspartate binding site. Positions 199–202 (QLFK) are aspartate. Arginine 221 serves as a coordination point for L-aspartate. Residues 221–223 (RDE) and glutamine 230 contribute to the ATP site. Residue histidine 446 participates in L-aspartate binding. Residue glutamate 491 coordinates ATP. Arginine 498 is an L-aspartate binding site. 543–546 (GLDR) contributes to the ATP binding site.

It belongs to the class-II aminoacyl-tRNA synthetase family. Type 1 subfamily. As to quaternary structure, homodimer.

It localises to the cytoplasm. The catalysed reaction is tRNA(Asx) + L-aspartate + ATP = L-aspartyl-tRNA(Asx) + AMP + diphosphate. In terms of biological role, aspartyl-tRNA synthetase with relaxed tRNA specificity since it is able to aspartylate not only its cognate tRNA(Asp) but also tRNA(Asn). Reaction proceeds in two steps: L-aspartate is first activated by ATP to form Asp-AMP and then transferred to the acceptor end of tRNA(Asp/Asn). The sequence is that of Aspartate--tRNA(Asp/Asn) ligase from Thermodesulfovibrio yellowstonii (strain ATCC 51303 / DSM 11347 / YP87).